A 53-amino-acid polypeptide reads, in one-letter code: uncharacterized protein (53 aa).

This is an uncharacterized protein from Archaeoglobus fulgidus (strain ATCC 49558 / DSM 4304 / JCM 9628 / NBRC 100126 / VC-16).